The following is a 22-amino-acid chain: Oxygen-evolving enhancer protein 2 (22 aa).

This sequence belongs to the PsbP family.

It is found in the plastid. It localises to the chloroplast thylakoid membrane. Functionally, may be involved in the regulation of photosystem II. This Physcomitrium patens (Spreading-leaved earth moss) protein is Oxygen-evolving enhancer protein 2.